A 283-amino-acid polypeptide reads, in one-letter code: Plasma membrane ascorbate-dependent reductase CYBRD1 (283 aa).

Over 1–5 (MEGYK) the chain is Cytoplasmic. The chain crosses the membrane as a helical span at residues 6–30 (SFLAFLVSSLLLGFLGVIFTLVWVL). A Cytochrome b561 domain is found at 13–218 (SSLLLGFLGV…FGGLVVWMVT (206 aa)). Residues 31–45 (HWREGLGWDGGAAEF) are Extracellular-facing. A helical transmembrane segment spans residues 46-67 (NWHPVLVTSGFIFIQGIAIIVY). Heme b is bound by residues H48, R68, and K77. Residues 68–76 (RLPWTWKCS) are Cytoplasmic-facing. 2 residues coordinate L-ascorbate: K77 and K81. A helical transmembrane segment spans residues 77–103 (KLLMKFIHAGLHLTALIFTIVALVAVF). Residue H84 participates in heme b binding. Residues 104-116 (DFHNAKNIPNMYS) lie on the Extracellular side of the membrane. H106 provides a ligand contact to Fe(3+). Residues 113–116 (NMYS) and H118 contribute to the heme b site. Residues 117–142 (LHSWIGLTVVILYALQLVLGVSIYLL) traverse the membrane as a helical segment. The Cytoplasmic portion of the chain corresponds to 143 to 149 (PFASNTL). Residue R150 coordinates L-ascorbate. Residues 150 to 177 (RAALMPVHVYSGLFIFGTVIATALMGIT) traverse the membrane as a helical segment. Residues H157 and E178 each contribute to the heme b site. At 178–195 (EKLIFSLKEPPYSKLPPE) the chain is on the extracellular side. A helical membrane pass occupies residues 196 to 220 (AIFVNTFGLLILVFGGLVVWMVTTP). The Cytoplasmic portion of the chain corresponds to 221–283 (AWKRPREQGM…LDEAGQRSTM (63 aa)). K223 lines the heme b pocket. Positions 234–262 (SPTVSSPDETEEGSTITDCSNTEKSDVEL) are disordered. Over residues 235-253 (PTVSSPDETEEGSTITDCS) the composition is skewed to polar residues.

Homodimer. Heme b serves as cofactor.

Its subcellular location is the cell membrane. The protein localises to the apical cell membrane. The catalysed reaction is Fe(3+)(out) + L-ascorbate(in) = monodehydro-L-ascorbate radical(in) + Fe(2+)(out) + H(+). It catalyses the reaction Cu(2+)(out) + L-ascorbate(in) = Cu(+)(out) + monodehydro-L-ascorbate radical(in) + H(+). It carries out the reaction monodehydro-L-ascorbate radical(out) + L-ascorbate(in) = monodehydro-L-ascorbate radical(in) + L-ascorbate(out). Plasma membrane reductase that uses cytoplasmic ascorbate as an electron donor to reduce extracellular Fe(3+) into Fe(2+). It is also able to reduce extracellular monodehydro-L-ascorbate and may be involved in extracellular ascorbate regeneration. May also function as a cupric transmembrane reductase. This Xenopus laevis (African clawed frog) protein is Plasma membrane ascorbate-dependent reductase CYBRD1 (cybrd1).